A 1122-amino-acid chain; its full sequence is Phytochrome A (1122 aa).

The span at 1 to 11 shows a compositional bias: polar residues; it reads MSGSRPTQSSE. The interval 1–21 is disordered; the sequence is MSGSRPTQSSEGSRRSRHSAR. The GAF domain occupies 218–402; that stretch reads SMERLCDTMV…VFAIHVNKEV (185 aa). Phytochromobilin is bound at residue cysteine 323. The region spanning 618–688 is the PAS 1 domain; it reads VTSEMVRLIE…RMLENALEGT (71 aa). The PAC domain occupies 695–747; sequence FEIKTHLSRADAGPISLVVNACASRDLHENVVGVCFVAHDLTGQKTVMDKFTR. The region spanning 748 to 822 is the PAS 2 domain; it reads IEGDYKAIIQ…KNQEAFVNLG (75 aa). The 218-residue stretch at 902 to 1119 folds into the Histidine kinase domain; it reads YIKRQIRNPL…SFIITAELAA (218 aa).

It belongs to the phytochrome family. In terms of assembly, homodimer. Interacts with NDPK2 and PKS4. Stabilized by interactions with PAPP5 and FYPP3 which are enhanced in the phosphorylated Pfr form. Interacts with COP1/SPA1 complex. Binds, via its photosensory domain, to PTAC12/HMR when photoactivated; this interaction stimulates its localization to photobodies. Interacts with FHY1, FHL and FHY3, especially upon far-red (FR) light illumination; when underphosphorylated. Forms PHYA/FHY1/HFR1 complex. Binds to PIF3/PAP3. Post-translationally, phosphorylated. Contains one covalently linked phytochromobilin chromophore. As to expression, expressed in fruits, flowers, leaves, stems, seedlings and roots.

It localises to the cytoplasm. The protein resides in the nucleus. The protein localises to the nucleoplasm. It is found in the nucleus speckle. Its function is as follows. Regulatory photoreceptor which exists in two forms that are reversibly interconvertible by light: the Pr form that absorbs maximally in the red region of the spectrum and the Pfr form that absorbs maximally in the far-red region. Photoconversion of Pr to Pfr induces an array of morphogenetic responses, whereas reconversion of Pfr to Pr cancels the induction of those responses. Pfr controls the expression of a number of nuclear genes including those encoding the small subunit of ribulose-bisphosphate carboxylase, chlorophyll A/B binding protein, protochlorophyllide reductase, rRNA, etc. It also controls the expression of its own gene(s) in a negative feedback fashion. Involved in the flowering time regulation. Can phosphorylate FHY1 and, possibly, FHL, in red light conditions; this inactivates their co-shuttling to the nucleus. Regulates phototropic responses both in the nucleus (e.g. hypocotyl elongation and cotyledon opening under high-irradiance conditions and seed germination under very-low-fluence conditions) and in the cytoplasm (e.g. negative gravitropism in blue light and red-enhanced phototropism). Promotes seed germination, suppression of hypocotyl elongation, and randomization of hypocotyl growth orientation in far-red light; these responses to far-red light are repressed by UNE10/PIF8. Stabilizes UNE10/PIF8 but sequesters PIF3/PAP3 from its target genes promoters in far-red light. In Arabidopsis thaliana (Mouse-ear cress), this protein is Phytochrome A.